The following is a 465-amino-acid chain: Branched-chain amino acid permease BcaP (465 aa).

The next 13 membrane-spanning stretches (helical) occupy residues 35-55 (LLGIGAIIGTGIFVLTGTGAV), 57-77 (AGPGLTISFVVAALACLFAAL), 103-123 (LMAFIIGWDLILEYMLAVSAV), 133-153 (SFLSGLGIHLPVALTAAPGAV), 159-179 (LFNLPAFVIVMAITYLLYLGI), 188-208 (IMVILKILVVLLFIAVAAVYV), 216-236 (FMPMGFGGVFSAAALVFFAFI), 258-278 (GIIFSLLVCTILYVTVSAIMT), 305-325 (VAGIIDIGAVLGMTTVMLVML), 355-375 (PYVATWFFGTMSALLGSLVPL), 380-400 (KLVNIGTLSAFVLISVAVIVL), 413-432 (CPGVPVIPGLAILFCLFLIL), and 437-456 (VTIVRFLVWLLIGLVIYFLY).

It belongs to the amino acid-polyamine-organocation (APC) superfamily.

The protein resides in the cell membrane. With respect to regulation, isoleucine uptake is efficiently reduced in the presence of 100-fold excess valine, leucine, alanine, threonine, serine, cysteine, asparagine, and a nonproteinaceous amino acid 4-azaleucine. Its function is as follows. Branched-chain amino acid transport system which is involved in the uptake of isoleucine, valine and probably leucine. Can also transport threonine, and is active as a minor serine permease. May be an amino acid permease of rather broad specificity, because several amino acids, albeit at 100-fold excess, are able to prevent isoleucine uptake. Probably does not transport methionine. Together with BraB and BrnQ, plays an important role in the activation of CodY, a branched-chain amino acid-responsive transcriptional regulator that controls the expression of several dozen transcription units in B.subtilis. This chain is Branched-chain amino acid permease BcaP, found in Bacillus subtilis (strain 168).